Consider the following 423-residue polypeptide: COUP transcription factor 1 (423 aa).

The segment at 1-81 (MAMVVSSWRD…QGPPGSGQSQ (81 aa)) is disordered. Positions 39–67 (EQQQQAGSGAPHTPQTPGQPGAPATPGTA) are enriched in low complexity. Residues 83-158 (HIECVVCGDK…VGMRREAVQR (76 aa)) constitute a DNA-binding region (nuclear receptor). NR C4-type zinc fingers lie at residues 86–106 (CVVCGDKSSGKHYGQFTCEGC) and 122–146 (CRANRNCPIDQHHRNQCQYCRLKKC). The NR LBD domain maps to 184–410 (YLSGYISLLL…TLIRDMLLSG (227 aa)).

Belongs to the nuclear hormone receptor family. NR2 subfamily. Binds DNA as dimer; homodimer and probable heterodimer with NR2F6. Interacts with GTF2B; this interaction is direct. Interacts with COPS2.

Its subcellular location is the nucleus. Its function is as follows. Coup (chicken ovalbumin upstream promoter) transcription factor binds to the ovalbumin promoter and, in conjunction with another protein (S300-II) stimulates initiation of transcription. Binds to both direct repeats and palindromes of the 5'-AGGTCA-3' motif. Represses transcriptional activity of LHCG. The chain is COUP transcription factor 1 (NR2F1) from Homo sapiens (Human).